Here is a 150-residue protein sequence, read N- to C-terminus: Ribonuclease pancreatic delta-type (150 aa).

The signal sequence occupies residues 1–25 (MGLEKSFILFSLLVLVLGWVQPSLG). Residue Arg-35 coordinates substrate. His-37 (proton acceptor) is an active-site residue. Disulfide bonds link Cys-51–Cys-110, Cys-65–Cys-121, Cys-83–Cys-136, and Cys-90–Cys-98. Substrate contacts are provided by residues 66–70 (KPVNT) and Lys-91. His-145 serves as the catalytic Proton donor.

The protein belongs to the pancreatic ribonuclease family. In terms of assembly, monomer.

Its subcellular location is the secreted. The enzyme catalyses an [RNA] containing cytidine + H2O = an [RNA]-3'-cytidine-3'-phosphate + a 5'-hydroxy-ribonucleotide-3'-[RNA].. It carries out the reaction an [RNA] containing uridine + H2O = an [RNA]-3'-uridine-3'-phosphate + a 5'-hydroxy-ribonucleotide-3'-[RNA].. In terms of biological role, endonuclease that catalyzes the cleavage of RNA on the 3' side of pyrimidine nucleotides. Acts on single-stranded and double-stranded RNA. This Rattus tiomanicus (Malayan field rat) protein is Ribonuclease pancreatic delta-type.